A 449-amino-acid polypeptide reads, in one-letter code: Glutamyl-tRNA reductase (449 aa).

Substrate-binding positions include Thr-58 to Arg-61, Ser-121, Glu-126 to Gln-128, and Gln-132. Cys-59 acts as the Nucleophile in catalysis. Gly-203–Ala-208 serves as a coordination point for NADP(+).

This sequence belongs to the glutamyl-tRNA reductase family. As to quaternary structure, homodimer.

The catalysed reaction is (S)-4-amino-5-oxopentanoate + tRNA(Glu) + NADP(+) = L-glutamyl-tRNA(Glu) + NADPH + H(+). It functions in the pathway porphyrin-containing compound metabolism; protoporphyrin-IX biosynthesis; 5-aminolevulinate from L-glutamyl-tRNA(Glu): step 1/2. In terms of biological role, catalyzes the NADPH-dependent reduction of glutamyl-tRNA(Glu) to glutamate 1-semialdehyde (GSA). This is Glutamyl-tRNA reductase from Helicobacter pylori (strain J99 / ATCC 700824) (Campylobacter pylori J99).